The sequence spans 773 residues: Preaspterpenacid I synthase sttA (773 aa).

Residues 4 to 359 (ISDVMKHCVP…RYHRTDLATT (356 aa)) form a sesterterpenoid synthase region. Mg(2+) is bound at residue D105. D105 is a binding site for substrate. The segment at 211–214 (RVNE) is substrate. N255 is a binding site for substrate. Substrate regions lie at residues 259 to 263 (SFPKE) and 350 to 351 (RY). The interval 360 to 769 (AEDRATLIGK…RMMLLGMGPK (410 aa)) is geranylfarnesyl diphosphate synthase. A disordered region spans residues 423-447 (AFKKRNSRNGKQNGTEGSKSTFTNG). A compositionally biased stretch (polar residues) spans 431–447 (NGKQNGTEGSKSTFTNG). 3 residues coordinate isopentenyl diphosphate: K493, R496, and H525. Mg(2+) contacts are provided by D532 and D536. Residue R541 participates in dimethylallyl diphosphate binding. R542 provides a ligand contact to isopentenyl diphosphate. Dimethylallyl diphosphate contacts are provided by K614, T615, Q652, N659, and K669.

The protein in the N-terminal section; belongs to the terpene synthase family. It in the C-terminal section; belongs to the FPP/GGPP synthase family.

It carries out the reaction 4 isopentenyl diphosphate + dimethylallyl diphosphate = (2E,6E,10E,14E)-geranylfarnesyl diphosphate + 4 diphosphate. It catalyses the reaction (2E,6E,10E,14E)-geranylfarnesyl diphosphate + H2O = preaspterpenacid acid I + diphosphate. Its pathway is secondary metabolite biosynthesis; terpenoid biosynthesis. Functionally, sesterterpenoid synthase; part of the gene cluster that mediates the biosynthesis of aspterpenacids. Performs both prenyl transferase and terpene cyclase activity, converting isopentenyl diphosphate and dimethylallyl diphosphate into geranylfarnesyl diphosphate (GFPP) and then converting GFPP into preaspterpenacid I. C22-oxidative modification of preaspterpenacid I by the cytochrome P450 monooxygenase sttB then leads to preaspterpenacid II. It has still to be determined how preaspterpenacid II is further modified to produce aspterpenacids. The chain is Preaspterpenacid I synthase sttA from Aspergillus terreus (strain NIH 2624 / FGSC A1156).